A 471-amino-acid polypeptide reads, in one-letter code: V-type ATP synthase beta chain (471 aa).

The protein belongs to the ATPase alpha/beta chains family.

Produces ATP from ADP in the presence of a proton gradient across the membrane. The V-type beta chain is a regulatory subunit. The chain is V-type ATP synthase beta chain from Streptococcus pyogenes serotype M28 (strain MGAS6180).